A 593-amino-acid polypeptide reads, in one-letter code: Protein GAMETE EXPRESSED 1 (593 aa).

The N-terminal stretch at 1 to 24 (MDRFSRKCLLFLLLIILLDSPLTC) is a signal peptide. Residues 25-427 (HSWGWFSSSS…LHNAMLLESR (403 aa)) are Extracellular-facing. Coiled-coil stretches lie at residues 156-194 (CQQLQSNAFKNEIERLVNELKNTAQYTEDKLDILESKSD) and 350-387 (EALQESRNTLQRLKEFSQEQQEDLAKRQEKLQEVHDHL). Residues 428–448 (VIKAFVIYFLSIFVIYMFTST) form a helical membrane-spanning segment. Topologically, residues 449–457 (KQTYIIRPR) are cytoplasmic. Residues 458–476 (LYIGLCVTLALEVASLRYV) form a helical membrane-spanning segment. At 477 to 485 (NDTERQAWM) the chain is on the extracellular side. A helical transmembrane segment spans residues 486 to 506 (INLIRSLFALLASAQLLHAAL). Topologically, residues 507–593 (SYRDYEVLNH…TRRLYNFRPR (87 aa)) are cytoplasmic.

As to quaternary structure, homodimer. In tricellular pollen, expressed in mature sperm cells. Not expressed in bicellular or unicellular pollen. Detected in ovules, roots and guard cells. Expressed in the embryo sac before cellularization, in the egg cell after cellularization, in the zygote/embryo immediately after fertilization and in the pollen vegetative cell.

The protein resides in the cell membrane. Functionally, has a dual function during gametophyte development and early embryogenesis. Required for correct pollen maturation. The chain is Protein GAMETE EXPRESSED 1 (GEX1) from Arabidopsis thaliana (Mouse-ear cress).